Consider the following 583-residue polypeptide: Malonate--CoA ligase ACSF3, mitochondrial (583 aa).

Residues 1–27 (MPPHLALPFRRLFWSLASSQLIPRRHR) constitute a mitochondrion transit peptide. ATP contacts are provided by residues 202–210 (TSGTTGRPK), D455, R469, and K561.

The protein belongs to the ATP-dependent AMP-binding enzyme family.

The protein localises to the mitochondrion. The catalysed reaction is tetracosanoate + ATP + CoA = tetracosanoyl-CoA + AMP + diphosphate. The enzyme catalyses malonate + ATP + CoA = malonyl-CoA + AMP + diphosphate. Catalyzes the initial reaction in intramitochondrial fatty acid synthesis, by activating malonate and methylmalonate, but not acetate, into their respective CoA thioester. May have some preference toward very-long-chain substrates. The protein is Malonate--CoA ligase ACSF3, mitochondrial of Mus musculus (Mouse).